Here is a 102-residue protein sequence, read N- to C-terminus: Putative pterin-4-alpha-carbinolamine dehydratase (102 aa).

This sequence belongs to the pterin-4-alpha-carbinolamine dehydratase family.

It catalyses the reaction (4aS,6R)-4a-hydroxy-L-erythro-5,6,7,8-tetrahydrobiopterin = (6R)-L-erythro-6,7-dihydrobiopterin + H2O. In Burkholderia ambifaria (strain MC40-6), this protein is Putative pterin-4-alpha-carbinolamine dehydratase.